Reading from the N-terminus, the 377-residue chain is Homoserine O-succinyltransferase (377 aa).

The 309-residue stretch at 50–358 folds into the AB hydrolase-1 domain; sequence NAILVCHALS…PSTYGHDSFL (309 aa). Serine 156 serves as the catalytic Nucleophile. Arginine 226 lines the substrate pocket. Residues aspartate 321 and histidine 354 contribute to the active site. Aspartate 355 provides a ligand contact to substrate.

This sequence belongs to the AB hydrolase superfamily. MetX family. In terms of assembly, homodimer.

It localises to the cytoplasm. The catalysed reaction is L-homoserine + succinyl-CoA = O-succinyl-L-homoserine + CoA. Its pathway is amino-acid biosynthesis; L-methionine biosynthesis via de novo pathway; O-succinyl-L-homoserine from L-homoserine: step 1/1. Functionally, transfers a succinyl group from succinyl-CoA to L-homoserine, forming succinyl-L-homoserine. This is Homoserine O-succinyltransferase from Nitrosomonas eutropha (strain DSM 101675 / C91 / Nm57).